The chain runs to 294 residues: Elongation factor Ts (294 aa).

The tract at residues 79–82 (TDFV) is involved in Mg(2+) ion dislocation from EF-Tu.

It belongs to the EF-Ts family.

It is found in the cytoplasm. In terms of biological role, associates with the EF-Tu.GDP complex and induces the exchange of GDP to GTP. It remains bound to the aminoacyl-tRNA.EF-Tu.GTP complex up to the GTP hydrolysis stage on the ribosome. The chain is Elongation factor Ts from Geobacillus thermodenitrificans (strain NG80-2).